The chain runs to 222 residues: Ribonuclease HII (222 aa).

The region spanning 17 to 206 (DLVAGVDEVG…VRAAHEARAS (190 aa)) is the RNase H type-2 domain. 3 residues coordinate a divalent metal cation: D23, E24, and D115.

This sequence belongs to the RNase HII family. The cofactor is Mn(2+). Requires Mg(2+) as cofactor.

The protein localises to the cytoplasm. The catalysed reaction is Endonucleolytic cleavage to 5'-phosphomonoester.. Its function is as follows. Endonuclease that specifically degrades the RNA of RNA-DNA hybrids. This Pseudomonas savastanoi pv. phaseolicola (strain 1448A / Race 6) (Pseudomonas syringae pv. phaseolicola (strain 1448A / Race 6)) protein is Ribonuclease HII.